The primary structure comprises 396 residues: Putative amidohydrolase YhaA (396 aa).

D85 is an active-site residue. The active-site Proton acceptor is the E143. Positions 144, 182, and 368 each coordinate Zn(2+).

This sequence belongs to the peptidase M20A family. The cofactor is Zn(2+). Co(2+) serves as cofactor.

This chain is Putative amidohydrolase YhaA (yhaA), found in Bacillus subtilis (strain 168).